A 186-amino-acid polypeptide reads, in one-letter code: Probable peptidoglycan L,D-endopeptidase MepK (186 aa).

An N-terminal signal peptide occupies residues 1–30; that stretch reads MNYVDQNKRKWLSLGGIALGISILPNSVLA. His-134, Asp-141, and His-174 together coordinate Zn(2+).

It belongs to the peptidase M15 family. Zn(2+) serves as cofactor.

It functions in the pathway cell wall biogenesis; cell wall polysaccharide biosynthesis. L,D-endopeptidase that cleaves meso-diaminopimelic acid (mDAP)-mDAP cross-links in peptidoglycan. It works in conjunction with other elongation-specific D,D-endopeptidases to make space for efficient incorporation of nascent peptidoglycan strands into the sacculus and thus enable cell wall expansion. The chain is Probable peptidoglycan L,D-endopeptidase MepK from Haemophilus influenzae (strain ATCC 51907 / DSM 11121 / KW20 / Rd).